A 367-amino-acid chain; its full sequence is Methylthioribose-1-phosphate isomerase (367 aa).

Substrate is bound by residues 48-50 (RGA), Arg91, and Gln215. Catalysis depends on Asp256, which acts as the Proton donor. 266–267 (NK) is a substrate binding site.

The protein belongs to the eIF-2B alpha/beta/delta subunits family. MtnA subfamily.

The enzyme catalyses 5-(methylsulfanyl)-alpha-D-ribose 1-phosphate = 5-(methylsulfanyl)-D-ribulose 1-phosphate. The protein operates within amino-acid biosynthesis; L-methionine biosynthesis via salvage pathway; L-methionine from S-methyl-5-thio-alpha-D-ribose 1-phosphate: step 1/6. Its function is as follows. Catalyzes the interconversion of methylthioribose-1-phosphate (MTR-1-P) into methylthioribulose-1-phosphate (MTRu-1-P). In Syntrophus aciditrophicus (strain SB), this protein is Methylthioribose-1-phosphate isomerase.